The chain runs to 447 residues: Probable ethanolamine kinase B (447 aa).

Low complexity predominate over residues 178–208 (STTISTSTSTSTSTSSTSPSTSPSLENSTLS). A disordered region spans residues 178–217 (STTISTSTSTSTSTSSTSPSTSPSLENSTLSPRNMNTQTS).

Belongs to the choline/ethanolamine kinase family.

The protein resides in the cytoplasm. It carries out the reaction ethanolamine + ATP = phosphoethanolamine + ADP + H(+). It participates in phospholipid metabolism; phosphatidylethanolamine biosynthesis; phosphatidylethanolamine from ethanolamine: step 1/3. Highly specific for ethanolamine phosphorylation. May be a rate-controlling step in phosphatidylethanolamine biosynthesis. This is Probable ethanolamine kinase B (etnkB) from Dictyostelium discoideum (Social amoeba).